Here is a 304-residue protein sequence, read N- to C-terminus: Undecaprenyl-diphosphatase (304 aa).

Transmembrane regions (helical) follow at residues 5 to 25 (FLFI…EFVP), 47 to 67 (GFPE…VVVL), 72 to 92 (ISSS…LKTS), 111 to 131 (FGIN…LFHD), 137 to 157 (LFST…LIVI), 209 to 231 (ISGL…AMVG), 248 to 268 (TNWI…LVVI), and 283 to 303 (FAIY…TKVI).

This sequence belongs to the UppP family.

It is found in the cell membrane. It carries out the reaction di-trans,octa-cis-undecaprenyl diphosphate + H2O = di-trans,octa-cis-undecaprenyl phosphate + phosphate + H(+). In terms of biological role, catalyzes the dephosphorylation of undecaprenyl diphosphate (UPP). Confers resistance to bacitracin. This is Undecaprenyl-diphosphatase from Clostridium perfringens (strain ATCC 13124 / DSM 756 / JCM 1290 / NCIMB 6125 / NCTC 8237 / Type A).